A 269-amino-acid polypeptide reads, in one-letter code: Putative hydro-lyase RL2444 (269 aa).

Belongs to the D-glutamate cyclase family.

The sequence is that of Putative hydro-lyase RL2444 from Rhizobium johnstonii (strain DSM 114642 / LMG 32736 / 3841) (Rhizobium leguminosarum bv. viciae).